Reading from the N-terminus, the 148-residue chain is Puroindoline-B (148 aa).

A signal peptide spans 1 to 19 (MKTLFLLALLALVASTTFA). Residues 20-29 (QYSEVGGWYN) constitute a propeptide that is removed on maturation.

Post-translationally, five disulfide bonds are present. As to expression, endosperm and aleurone layer of developing kernels. In the aleurone layer, mainly localized to starch granules and the surface of the plasma membrane, forming a uniform layer, also abundant in the intercellular space. In the endosperm, mainly localized to starch granules and the plasma membrane, but less abundant in the intercellular space. Not found in roots or coleoptiles.

The protein localises to the membrane. It is found in the secreted. It localises to the extracellular space. Acts as a membranotoxin, probably through its antibacterial and antifungal activities, contributing to the defense mechanism of the plant against predators. Forms monovalent cation-selective ion channels in membranes. Has antibacterial activity against the Gram-positive bacteria S.aureus and C.michiganensis, and the Gram-negative bacteria E.coli, P.syringae pv phaseoli, A.tumefaciens and E.carotovora subsp carotovora. Acts synergistically with PINA against bacteria. Contributes to grain texture and hardness. In Triticum aestivum (Wheat), this protein is Puroindoline-B (PINB).